We begin with the raw amino-acid sequence, 109 residues long: Protein reprimo (109 aa).

2 N-linked (GlcNAc...) asparagine glycosylation sites follow: Asn-7 and Asn-18. A helical transmembrane segment spans residues 56–76 (VVQIAVMCVLSLTVVFGIFFL). Ser-98 is modified (phosphoserine).

Belongs to the reprimo family.

The protein resides in the cytoplasm. It localises to the membrane. Functionally, may be involved in the regulation of p53-dependent G2 arrest of the cell cycle. Seems to induce cell cycle arrest by inhibiting CDK1 activity and nuclear translocation of the CDC2 cyclin B1 complex. The sequence is that of Protein reprimo (RPRM) from Bos taurus (Bovine).